The primary structure comprises 555 residues: Formate--tetrahydrofolate ligase (555 aa).

64–71 is an ATP binding site; it reads TKAGIGKT.

Belongs to the formate--tetrahydrofolate ligase family.

It carries out the reaction (6S)-5,6,7,8-tetrahydrofolate + formate + ATP = (6R)-10-formyltetrahydrofolate + ADP + phosphate. Its pathway is one-carbon metabolism; tetrahydrofolate interconversion. The polypeptide is Formate--tetrahydrofolate ligase (Phocaeicola vulgatus (strain ATCC 8482 / DSM 1447 / JCM 5826 / CCUG 4940 / NBRC 14291 / NCTC 11154) (Bacteroides vulgatus)).